A 365-amino-acid polypeptide reads, in one-letter code: Nicotinate N-methyltransferase 1 (365 aa).

S-adenosyl-L-methionine is bound at residue Asp-232.

It belongs to the class I-like SAM-binding methyltransferase superfamily. Cation-independent O-methyltransferase family.

The enzyme catalyses nicotinate + S-adenosyl-L-methionine = N-methylnicotinate + S-adenosyl-L-homocysteine. Its function is as follows. Involved in nicotinate detoxification in planta. Catalyzes the conversion of nicotinate to N-methylnicotinate, which is a detoxified form of endogenous nicotinate in planta. The chain is Nicotinate N-methyltransferase 1 from Oryza sativa subsp. japonica (Rice).